We begin with the raw amino-acid sequence, 703 residues long: UvrABC system protein B (703 aa).

The Helicase ATP-binding domain maps to 33-419 (ERIENGENDV…SDGVVEQIIR (387 aa)). 46 to 53 (GATGTGKT) is an ATP binding site. Residues 99 to 122 (YYDYYQPEAYIPQTDTYIEKDSNI) carry the Beta-hairpin motif. The Helicase C-terminal domain maps to 436–589 (QIDDLLAEIK…QIAYNQEHGI (154 aa)). The region spanning 659 to 694 (ADLIRQLSEQMHTAAEQLQFELAARLRDEIRDLKKE) is the UVR domain.

This sequence belongs to the UvrB family. Forms a heterotetramer with UvrA during the search for lesions. Interacts with UvrC in an incision complex.

It is found in the cytoplasm. The UvrABC repair system catalyzes the recognition and processing of DNA lesions. A damage recognition complex composed of 2 UvrA and 2 UvrB subunits scans DNA for abnormalities. Upon binding of the UvrA(2)B(2) complex to a putative damaged site, the DNA wraps around one UvrB monomer. DNA wrap is dependent on ATP binding by UvrB and probably causes local melting of the DNA helix, facilitating insertion of UvrB beta-hairpin between the DNA strands. Then UvrB probes one DNA strand for the presence of a lesion. If a lesion is found the UvrA subunits dissociate and the UvrB-DNA preincision complex is formed. This complex is subsequently bound by UvrC and the second UvrB is released. If no lesion is found, the DNA wraps around the other UvrB subunit that will check the other stand for damage. This is UvrABC system protein B from Bifidobacterium longum (strain NCC 2705).